Here is a 350-residue protein sequence, read N- to C-terminus: Vetispiradiene synthase 3 (350 aa).

Mg(2+)-binding residues include Asp-103, Asp-107, Asp-246, Thr-250, and Glu-254. The DDXXD motif motif lies at 103–107 (DDTFD).

This sequence belongs to the terpene synthase family. Tpsa subfamily. Mg(2+) serves as cofactor.

It is found in the cytoplasm. It catalyses the reaction (2E,6E)-farnesyl diphosphate = (-)-vetispiradiene + diphosphate. It participates in secondary metabolite biosynthesis; terpenoid biosynthesis. Its function is as follows. Sesquiterpene synthase that catalyzes the formation of vetispiradiene from trans,trans-farnesyl diphosphate. The initial internal cyclization produces the monocyclic intermediate germacrene A. The polypeptide is Vetispiradiene synthase 3 (Hyoscyamus muticus (Egyptian henbane)).